Consider the following 267-residue polypeptide: GTP cyclohydrolase MptA (267 aa).

It belongs to the GTP cyclohydrolase IV family. Homodimer. Fe(2+) serves as cofactor.

It carries out the reaction GTP + H2O = 7,8-dihydroneopterin 2',3'-cyclic phosphate + formate + diphosphate + H(+). It participates in cofactor biosynthesis; 5,6,7,8-tetrahydromethanopterin biosynthesis. Its function is as follows. Converts GTP to 7,8-dihydro-D-neopterin 2',3'-cyclic phosphate, the first intermediate in the biosynthesis of coenzyme methanopterin. The polypeptide is GTP cyclohydrolase MptA (Thermococcus kodakarensis (strain ATCC BAA-918 / JCM 12380 / KOD1) (Pyrococcus kodakaraensis (strain KOD1))).